Consider the following 265-residue polypeptide: 3-methyl-2-oxobutanoate hydroxymethyltransferase (265 aa).

Mg(2+) contacts are provided by Asp44 and Asp83. 3-methyl-2-oxobutanoate-binding positions include 44-45 (DS), Asp83, and Lys113. A Mg(2+)-binding site is contributed by Glu115. Glu183 serves as the catalytic Proton acceptor.

It belongs to the PanB family. Homodecamer; pentamer of dimers. It depends on Mg(2+) as a cofactor.

The protein resides in the cytoplasm. The catalysed reaction is 3-methyl-2-oxobutanoate + (6R)-5,10-methylene-5,6,7,8-tetrahydrofolate + H2O = 2-dehydropantoate + (6S)-5,6,7,8-tetrahydrofolate. Its pathway is cofactor biosynthesis; (R)-pantothenate biosynthesis; (R)-pantoate from 3-methyl-2-oxobutanoate: step 1/2. Its function is as follows. Catalyzes the reversible reaction in which hydroxymethyl group from 5,10-methylenetetrahydrofolate is transferred onto alpha-ketoisovalerate to form ketopantoate. The protein is 3-methyl-2-oxobutanoate hydroxymethyltransferase of Leptospira borgpetersenii serovar Hardjo-bovis (strain L550).